A 451-amino-acid polypeptide reads, in one-letter code: Metalloprotease MJ0996 (451 aa).

It belongs to the peptidase U62 family.

Probable metalloprotease. The sequence is that of Metalloprotease MJ0996 from Methanocaldococcus jannaschii (strain ATCC 43067 / DSM 2661 / JAL-1 / JCM 10045 / NBRC 100440) (Methanococcus jannaschii).